The sequence spans 437 residues: Adenylosuccinate synthetase (437 aa).

Residues 12 to 18 (GDEGKGK) and 40 to 42 (GHT) contribute to the GTP site. Catalysis depends on D13, which acts as the Proton acceptor. Mg(2+) contacts are provided by D13 and G40. IMP is bound by residues 13-16 (DEGK), 38-41 (NAGH), T128, R142, Q223, T238, and R302. H41 acts as the Proton donor in catalysis. 298-304 (TTTGRRR) lines the substrate pocket. Residues R304, 330-332 (KLD), and 412-414 (SLG) each bind GTP.

It belongs to the adenylosuccinate synthetase family. In terms of assembly, homodimer. Requires Mg(2+) as cofactor.

It localises to the cytoplasm. It catalyses the reaction IMP + L-aspartate + GTP = N(6)-(1,2-dicarboxyethyl)-AMP + GDP + phosphate + 2 H(+). The protein operates within purine metabolism; AMP biosynthesis via de novo pathway; AMP from IMP: step 1/2. In terms of biological role, plays an important role in the de novo pathway of purine nucleotide biosynthesis. Catalyzes the first committed step in the biosynthesis of AMP from IMP. This Synechococcus sp. (strain CC9311) protein is Adenylosuccinate synthetase.